The primary structure comprises 1113 residues: Period circadian protein homolog 3 (1113 aa).

The segment at 1–48 (MDPCGDPAVPGGDCPQTRGPGLQGASGQEGPLQGTCVDSSHSEHEDRN) is disordered. The Nuclear export signal 1 motif lies at 54 to 63 (LIMVVQEMKK). PAS domains follow at residues 120-187 (LASE…PTQL) and 258-324 (YEAP…KVLK). The PAC domain maps to 333 to 376 (HSPVRFCTQNGEYVILDSSWSSFVNPWSRKVSFIIGRHKVRTSP). The Nuclear export signal 3 motif lies at 399–408 (LQEQIHKLLL). Positions 418-427 (GYGSLGSSGS) are enriched in low complexity. 5 disordered regions span residues 418 to 451 (GYGSLGSSGSQEQHVSITSSSESSGHCPEEGQHE), 485 to 530 (VAET…SSSY), 561 to 580 (TSSSSEEAKPIPEVDSSQRD), 718 to 742 (HSRCAGSERQKHKRKKLPAPVDTSS), and 871 to 906 (LVPAMAPNPEPTTSGHSQRRVEENWEAHSEELPFIS). 2 stretches are compositionally biased toward polar residues: residues 428-441 (QEQHVSITSSSESS) and 501-530 (FSSSQTLKNKSTTDTGSGGNLQQEQPSSSY). A CSNK1E binding domain region spans residues 551 to 750 (LKRKCISCTN…SSPGAHLCPH (200 aa)). Residues 566–580 (EEAKPIPEVDSSQRD) are compositionally biased toward basic and acidic residues. A Nuclear localization signal motif is present at residues 719–735 (SRCAGSERQKHKRKKLP). A compositionally biased stretch (basic and acidic residues) spans 889–901 (RRVEENWEAHSEE). S907 is subject to Phosphoserine. The short motif at 913-920 (LQLNLLQE) is the Nuclear export signal 2 element. Residues 921 to 1010 (EMPAPSESAD…DRQRDEALPG (90 aa)) are disordered. Over residues 962–986 (ATATAQQESAAASGSSASSIYFSST) the composition is skewed to low complexity. The segment covering 993–1007 (SENRQRPQDRQRDEA) has biased composition (basic and acidic residues). Residues 1035–1113 (ERGREEVLKQ…LEQHPAEDTS (79 aa)) form a CRY binding domain region.

In terms of assembly, homodimer. Component of the circadian core oscillator, which includes the CRY proteins, CLOCK or NPAS2, BMAL1 or BMAL2, CSNK1D and/or CSNK1E, TIMELESS and the PER proteins. Interacts directly with PER1, PER2, CRY1, CRY2, and TIMELESS; interaction with CRY1 and CRY2 is weak and not rhythmic. Interacts with FBXW11 and BTRC. Post-translationally, phosphorylation by CSNK1E is weak and appears to require association with PER1 and translocation to the nucleus. In terms of processing, ubiquitinated. Widely expressed. Expressed in heart, brain, lung, liver, skeletal muscle, testis, and at low level in the spleen and kidney. In brain, mainly found in the SCN, hippocampus, piriform cortex, and cerebellum. Lower level of expression in the neocortex. Expression exhibits synchronous oscillations in liver, skeletal muscle and testis.

The protein resides in the cytoplasm. It is found in the nucleus. Originally described as a core component of the circadian clock. The circadian clock, an internal time-keeping system, regulates various physiological processes through the generation of approximately 24 hour circadian rhythms in gene expression, which are translated into rhythms in metabolism and behavior. It is derived from the Latin roots 'circa' (about) and 'diem' (day) and acts as an important regulator of a wide array of physiological functions including metabolism, sleep, body temperature, blood pressure, endocrine, immune, cardiovascular, and renal function. Consists of two major components: the central clock, residing in the suprachiasmatic nucleus (SCN) of the brain, and the peripheral clocks that are present in nearly every tissue and organ system. Both the central and peripheral clocks can be reset by environmental cues, also known as Zeitgebers (German for 'timegivers'). The predominant Zeitgeber for the central clock is light, which is sensed by retina and signals directly to the SCN. The central clock entrains the peripheral clocks through neuronal and hormonal signals, body temperature and feeding-related cues, aligning all clocks with the external light/dark cycle. Circadian rhythms allow an organism to achieve temporal homeostasis with its environment at the molecular level by regulating gene expression to create a peak of protein expression once every 24 hours to control when a particular physiological process is most active with respect to the solar day. Transcription and translation of core clock components (CLOCK, NPAS2, BMAL1, BMAL2, PER1, PER2, PER3, CRY1 and CRY2) plays a critical role in rhythm generation, whereas delays imposed by post-translational modifications (PTMs) are important for determining the period (tau) of the rhythms (tau refers to the period of a rhythm and is the length, in time, of one complete cycle). A diurnal rhythm is synchronized with the day/night cycle, while the ultradian and infradian rhythms have a period shorter and longer than 24 hours, respectively. Disruptions in the circadian rhythms contribute to the pathology of cardiovascular diseases, cancer, metabolic syndromes and aging. A transcription/translation feedback loop (TTFL) forms the core of the molecular circadian clock mechanism. Transcription factors, CLOCK or NPAS2 and BMAL1 or BMAL2, form the positive limb of the feedback loop, act in the form of a heterodimer and activate the transcription of core clock genes and clock-controlled genes (involved in key metabolic processes), harboring E-box elements (5'-CACGTG-3') within their promoters. The core clock genes: PER1/2/3 and CRY1/2 which are transcriptional repressors form the negative limb of the feedback loop and interact with the CLOCK|NPAS2-BMAL1|BMAL2 heterodimer inhibiting its activity and thereby negatively regulating their own expression. This heterodimer also activates nuclear receptors NR1D1, NR1D2, RORA, RORB and RORG, which form a second feedback loop and which activate and repress BMAL1 transcription, respectively. Has a redundant role with the other PER proteins PER1 and PER2 and is not essential for the circadian rhythms maintenance. In contrast, plays an important role in sleep-wake timing and sleep homeostasis probably through the transcriptional regulation of sleep homeostasis-related genes, without influencing circadian parameters. Can bind heme. The chain is Period circadian protein homolog 3 (Per3) from Mus musculus (Mouse).